Consider the following 410-residue polypeptide: Phosphoglycerate kinase (410 aa).

Substrate is bound by residues 19-21 (DLN), Arg-34, 57-60 (HQGK), Arg-114, and Arg-154. Residues Glu-332 and 358–361 (GGHS) contribute to the ATP site.

The protein belongs to the phosphoglycerate kinase family. In terms of assembly, homodimer.

Its subcellular location is the cytoplasm. It carries out the reaction (2R)-3-phosphoglycerate + ATP = (2R)-3-phospho-glyceroyl phosphate + ADP. It functions in the pathway carbohydrate degradation; glycolysis; pyruvate from D-glyceraldehyde 3-phosphate: step 2/5. This Pyrococcus horikoshii (strain ATCC 700860 / DSM 12428 / JCM 9974 / NBRC 100139 / OT-3) protein is Phosphoglycerate kinase (pgk).